The following is a 151-amino-acid chain: Macrodomain Ter protein (151 aa).

The protein belongs to the MatP family. Homodimer.

It localises to the cytoplasm. Required for spatial organization of the terminus region of the chromosome (Ter macrodomain) during the cell cycle. Prevents early segregation of duplicated Ter macrodomains during cell division. Binds specifically to matS, which is a 13 bp signature motif repeated within the Ter macrodomain. The chain is Macrodomain Ter protein from Photorhabdus laumondii subsp. laumondii (strain DSM 15139 / CIP 105565 / TT01) (Photorhabdus luminescens subsp. laumondii).